Reading from the N-terminus, the 1382-residue chain is MRFRSDSRADHQHPKKQGSMDPDTIQALKYQDRSSSSSSNNKPKEKVGSASTSPSPTLFASNDSVKVEIGVGSSDKEKPDVKVSFFTIFRYASKRQLLINLFGTGMAIAAGAAQPLMNIFIGKIATVFLHFTSAIRSGDLDAIRAAHSDVYSTINSDALILLYLGIGMFFASMLYMAVFSYTSERIASNIKYAYLSSLFSKPIDFFEQCGQGTVAAKIGSDVHLIQIGIGEKLPMAIMYFSTFVTAAAVAFAFSWRLSLVLLPIAPLILLAGGVMGALTKGCKLVELDCIAKAASRAEEAFNAIKILKAFSKERTIGQEYDTLTTDTKAAGAKAGRIQGVGVGALLFIIYAGYALAFFYGAQLIARGELLPGRIVSVVFANFAGAFAIANLFSMIENFTMATAAASSVIGTIQQDLASSELSESRRNEEKSQTSRQLATGYNAELKLDHVHFAYPSKPERPVLKDLSLTIPSCVTTAIVGLSGSGKSTIFALLQRFYAPTRGSIRLDDVDISALDVDWLRGQIGVVEQQPTLFAMSIQANIELGLPNRHTRSAEELESLVVQAAKKANAHNFITALTHGYQTEVGSQGFLLSGGQKQRIAIARALIRDPKILLLDEATSALDSKSEAVVQAALDEAAKDRTTIIISHRLSTVRNADNIVVLGPDGIIEQGSHHELSIKPNGTFASMLRHQDDKTKPVMVTSEPEIVDSSHSLCLTEIPTMEIAHSLEVSRTISALADSVKPKDPSKNFEPPGESYASPAADGVKQDAPKTDSVGLRTLLHILIKDPETGRLAQLYMLGSLCAAIIGAVYPVYAILFGTAIEDYAPCNSSDGRPCPNPARGTMLHNNRISSGSFFIVAVGCAFISFYHVRSLYIAGSRVTHRLRVLVFQSLLCLDASFFDDPVNTSNDLASSLSVLSQGIYGGVGPTLGSIVQSLATVIVGYAVAIGYGWRLALVVIASTPLTITAGLLRLRVLARKESKTKQAHQHTTQQACESIGAIRTVSAFNLQPQTLQVYQKNLENASRSLRPTMCYSSVLFGLSQCVQLLVTALAFWYGGRELAQGHTSSKGFFTILISVVYGSVQAGNIFNYSADFSSAHSAACKSLSILKQAKEVVAEAQANDRDVQWNTEDSLPSGQIALKEVTFRYPQRPTCTVLDRLSLTIEPGTFCAIVGGSGSGKSTVLQLIERFYTPESGRVLLDGYSITEGDPARFRKYMSYVPQEPTLFQGTIGWNIALGATDENPEDVPLAKIQQAAELAQLGDLLASLPEGLNTQLSARGVQMSGGQKQRIAIARAMIRDPRVLLLDEATSALDPASERAVQGALDNVSQGRTTIAVAHRLSTIAKADKVIVMQAGKVVEEGSPRELFQRDGLFALMARLQGVSF.

Residues 1 to 12 (MRFRSDSRADHQ) show a composition bias toward basic and acidic residues. The interval 1–56 (MRFRSDSRADHQHPKKQGSMDPDTIQALKYQDRSSSSSSNNKPKEKVGSASTSPSP) is disordered. Asn62 carries N-linked (GlcNAc...) asparagine glycosylation. The next 6 membrane-spanning stretches (helical) occupy residues 101–121 (LFGT…NIFI), 159–179 (LILL…MAVF), 233–253 (LPMA…AFAF), 259–279 (LVLL…GALT), 339–359 (GVGV…AFFY), and 374–394 (IVSV…LFSM). The 300-residue stretch at 101–400 (LFGTGMAIAA…LFSMIENFTM (300 aa)) folds into the ABC transmembrane type-1 1 domain. Residue Asn397 is glycosylated (N-linked (GlcNAc...) asparagine). The 244-residue stretch at 445–688 (LKLDHVHFAY…PNGTFASMLR (244 aa)) folds into the ABC transporter 1 domain. Position 480-487 (480-487 (GLSGSGKS)) interacts with ATP. Asn680 carries an N-linked (GlcNAc...) asparagine glycan. Residues 738-768 (SVKPKDPSKNFEPPGESYASPAADGVKQDAP) are disordered. In terms of domain architecture, ABC transmembrane type-1 2 spans 797-1094 (LGSLCAAIIG…IFNYSADFSS (298 aa)). A helical membrane pass occupies residues 800–820 (LCAAIIGAVYPVYAILFGTAI). N-linked (GlcNAc...) asparagine glycosylation occurs at Asn827. Residues 848–868 (ISSGSFFIVAVGCAFISFYHV) traverse the membrane as a helical segment. N-linked (GlcNAc...) asparagine glycosylation is present at Asn903. 2 consecutive transmembrane segments (helical) span residues 911–931 (SLSV…GSIV) and 951–973 (LALV…LRVL). Residue Asn1020 is glycosylated (N-linked (GlcNAc...) asparagine). A run of 2 helical transmembrane segments spans residues 1034–1054 (VLFG…FWYG) and 1067–1087 (GFFT…NIFN). The region spanning 1136–1377 (IALKEVTFRY…DGLFALMARL (242 aa)) is the ABC transporter 2 domain. 1171-1178 (GGSGSGKS) is an ATP binding site. Residue Asn1324 is glycosylated (N-linked (GlcNAc...) asparagine).

The protein belongs to the ABC transporter superfamily. ABCB family. Multidrug resistance exporter (TC 3.A.1.201) subfamily.

The protein resides in the cell membrane. Its function is as follows. ABC-type transporter; part of the gene cluster that mediates the biosynthesis of the glycolipid biosurfactant ustilagic acid (UA). UA is a secreted cellobiose glycolipid that is toxic for many microorganisms and confers biocontrol activity to U.maydis. Export of UA is presumably catalyzed by the ABC transporter atr1. Atr1 appears to be quite unspecific, as many of the UA derivatives produced by cluster mutant strains are readily exported. The chain is ABC-type transporter atr1 from Mycosarcoma maydis (Corn smut fungus).